An 89-amino-acid polypeptide reads, in one-letter code: Huwentoxin-IV (89 aa).

An N-terminal signal peptide occupies residues 1 to 24 (MVNMKASMFLALAGLVLLFVVCYA). Residues 25–52 (SESEEKEFSNELLSSVLAVDDNSKGEER) constitute a propeptide that is removed on maturation. The residue at position 53 (Glu-53) is a Pyrrolidone carboxylic acid (Glu); partial. Cystine bridges form between Cys-54–Cys-69, Cys-61–Cys-76, and Cys-68–Cys-83. Ile-87 is subject to Isoleucine amide.

Belongs to the neurotoxin 10 (Hwtx-1) family. 22 (Htx-4) subfamily. Post-translationally, two forms of huwentoxin-IV exist in the venom of H.schmidti, a non-N-terminally modified (HwTx-IV) and a naturally modified peptide with pyroglutamic acid residue at position 53 (mHwTx-IV). mHwTx-IV shows no observable difference with the unmodified toxin when applied to the TTX-S sodium channel of DRG neuron (IC(50)~50 nM) or when tested on hNav1.7/SCN9A (IC(50)=30.8 nM). In addition, similarly to the unmodified toxin, mHwTx-IV has only a weak affinity for lipid membranes. However, in contrast with HwTx-IV, which dissociates at moderate and high depolarization voltages (50-200 mV), mHwTx-IV inhibition of TTX-sensitive sodium channels is not reversed by strong depolarization voltages. As to expression, expressed by the venom gland.

It localises to the secreted. Functionally, this lethal neurotoxin (without cyclization at position 53) inhibits neuronal voltage-gated sodium channel Nav1.2/SCN2A (IC(50)=10-150 nM), rNav1.3/SCN3A (IC(50)=338 nM), Nav1.6/SCN8A (IC(50)=117 nM), and hNav1.7/SCN9A (IC(50)=9.6-33 nM). It inhibits activation of sodium channel by trapping the voltage sensor of domain II (DIIS4) in the closed configuration. The toxin neither shifts the Nav1.7/SCN9A activation curve nor modifies the slope factor. It does not slow fast-inactivation of hNav1.7/SCN9A channels. In addition, it has only a weak affinity for lipid membranes. This toxin also exists with a pyroglutamate at position 53. The sole difference observed between modified (mHwTx-IV) and unmodified toxins is that moderate or high depolarization voltages (200 mV) permit the unmodified toxin to dissociate, whereas mHwTx-IV toxin does not dissociate, even at high depolarization voltages. These data indicate that mHwTx-IV strongly binds to voltage sensor of sodium channel even at extreme depolarization voltages. The chain is Huwentoxin-IV from Cyriopagopus schmidti (Chinese bird spider).